The primary structure comprises 963 residues: Vacuolar membrane protease (963 aa).

Over 1–15 (MVSSRRGFNPIAFTP) the chain is Cytoplasmic. Residues 16 to 36 (WPVTILTSLVYLALIIPIIVV) form a helical membrane-spanning segment. Residues 37 to 391 (HHLVPPAPKQ…FQLNTLFGLS (355 aa)) are Vacuolar-facing. N-linked (GlcNAc...) asparagine glycosylation is found at N111 and N114. Residues H170 and D182 each contribute to the Zn(2+) site. E216 (proton acceptor) is an active-site residue. E217, E242, and H315 together coordinate Zn(2+). Residues 392-412 (VALLVVAPLLLILTSVALFAV) form a helical membrane-spanning segment. Residues 413-441 (DKMYMFSMYTYLSESGGQVSLYGLRGMFR) lie on the Cytoplasmic side of the membrane. A helical transmembrane segment spans residues 442–462 (FPLILGISTALTVALAFLIMK). Residues 463-473 (VNPFIIYSSPY) lie on the Vacuolar side of the membrane. The helical transmembrane segment at 474–494 (AVWSMMLSTCMFFAWFISCVA) threads the bilayer. At 495-504 (DFARPSALHR) the chain is on the cytoplasmic side. The chain crosses the membrane as a helical span at residues 505-525 (AYAFSWMFGILWVFLVIATVY). Topologically, residues 526 to 535 (QRQHGIASSY) are vacuolar. The chain crosses the membrane as a helical span at residues 536–556 (FIVFYFAGVSVATWISYLELF). Over 557–668 (GLSTTQDYAR…WSIYLVSSAW (112 aa)) the chain is Cytoplasmic. A disordered region spans residues 569 to 618 (SRLSDRTPSSDSHLLAPSADELPSSGSVAGRDFNPEDVEDEEPTESTSLL). The segment covering 603–612 (PEDVEDEEPT) has biased composition (acidic residues). The chain crosses the membrane as a helical span at residues 669-689 (ILQFLLVAPIVLILLGQLGLF). Topologically, residues 690–705 (LTSATYQIGADGGSQF) are vacuolar. The helical transmembrane segment at 706–726 (IIYIGIAVLSVLILLPLFPFI) threads the bilayer. Over 727 to 732 (HRFTYH) the chain is Cytoplasmic. Residues 733-753 (IPTFMLFVLIGTLVYNLTAFP) form a helical membrane-spanning segment. Topologically, residues 754–963 (FSHNSRLKVA…LVEGSYSFKL (210 aa)) are vacuolar. An N-linked (GlcNAc...) asparagine glycan is attached at N835.

Belongs to the peptidase M28 family. It depends on Zn(2+) as a cofactor.

Its subcellular location is the vacuole membrane. Its function is as follows. May be involved in vacuolar sorting and osmoregulation. This is Vacuolar membrane protease from Arthroderma gypseum (strain ATCC MYA-4604 / CBS 118893) (Microsporum gypseum).